Consider the following 288-residue polypeptide: Formamidopyrimidine-DNA glycosylase (288 aa).

The active-site Schiff-base intermediate with DNA is P2. E3 (proton donor) is an active-site residue. Catalysis depends on K58, which acts as the Proton donor; for beta-elimination activity. The DNA site is built by H101, R124, and R169. The segment at 254-288 (LVYDRAGLPCRVCGTPIRQIVQGQRSTFYCPACQR) adopts an FPG-type zinc-finger fold. R278 functions as the Proton donor; for delta-elimination activity in the catalytic mechanism.

This sequence belongs to the FPG family. In terms of assembly, monomer. Zn(2+) serves as cofactor.

It carries out the reaction Hydrolysis of DNA containing ring-opened 7-methylguanine residues, releasing 2,6-diamino-4-hydroxy-5-(N-methyl)formamidopyrimidine.. It catalyses the reaction 2'-deoxyribonucleotide-(2'-deoxyribose 5'-phosphate)-2'-deoxyribonucleotide-DNA = a 3'-end 2'-deoxyribonucleotide-(2,3-dehydro-2,3-deoxyribose 5'-phosphate)-DNA + a 5'-end 5'-phospho-2'-deoxyribonucleoside-DNA + H(+). Its function is as follows. Involved in base excision repair of DNA damaged by oxidation or by mutagenic agents. Acts as a DNA glycosylase that recognizes and removes damaged bases. Has a preference for oxidized purines, such as 7,8-dihydro-8-oxoguanine (8-oxoG). Has AP (apurinic/apyrimidinic) lyase activity and introduces nicks in the DNA strand. Cleaves the DNA backbone by beta-delta elimination to generate a single-strand break at the site of the removed base with both 3'- and 5'-phosphates. This Ralstonia nicotianae (strain ATCC BAA-1114 / GMI1000) (Ralstonia solanacearum) protein is Formamidopyrimidine-DNA glycosylase.